We begin with the raw amino-acid sequence, 164 residues long: UPF0225 protein Shewmr4_2054 (164 aa).

It belongs to the UPF0225 family.

This Shewanella sp. (strain MR-4) protein is UPF0225 protein Shewmr4_2054.